We begin with the raw amino-acid sequence, 97 residues long: Scorpine-like peptide Ev37 (97 aa).

Positions 1-19 are cleaved as a signal peptide; it reads MNSKLTVIVLLALITIASC. Residues 55 to 95 form the BetaSPN-type CS-alpha/beta domain; the sequence is QNLCAFNVDTVGMCDADCKRQGKAKGVCHGTKCKCDVELSY. Cystine bridges form between Cys-58-Cys-82, Cys-68-Cys-87, and Cys-72-Cys-89.

The protein belongs to the long chain scorpion toxin family. Class 3 subfamily. As to expression, expressed by the venom gland.

It is found in the secreted. Its function is as follows. Selectively inhibits Kv1.3/KCNA3 channel (IC(50)=0.95 uM). Both N-terminal and C-terminal domains are likely involved in the interaction with Kv1.3/KCNA3, since neither its N-terminal domain (1-36) nor its C-terminal domain (37-78) block Kv1.3/KCNA3 channel. This chain is Scorpine-like peptide Ev37, found in Euscorpiops validus (Scorpion).